The following is a 254-amino-acid chain: Probable transcriptional regulatory protein Saro_0419 (254 aa).

Residues Met-1 to Lys-14 show a composition bias toward basic residues. Residues Met-1–Ser-22 are disordered.

Belongs to the TACO1 family.

It localises to the cytoplasm. In Novosphingobium aromaticivorans (strain ATCC 700278 / DSM 12444 / CCUG 56034 / CIP 105152 / NBRC 16084 / F199), this protein is Probable transcriptional regulatory protein Saro_0419.